A 191-amino-acid chain; its full sequence is Large ribosomal subunit protein uL5 (191 aa).

The protein belongs to the universal ribosomal protein uL5 family. Part of the 50S ribosomal subunit; part of the 5S rRNA/L5/L18/L25 subcomplex. Contacts the 5S rRNA and the P site tRNA. Forms a bridge to the 30S subunit in the 70S ribosome.

Its function is as follows. This is one of the proteins that bind and probably mediate the attachment of the 5S RNA into the large ribosomal subunit, where it forms part of the central protuberance. In the 70S ribosome it contacts protein S13 of the 30S subunit (bridge B1b), connecting the 2 subunits; this bridge is implicated in subunit movement. Contacts the P site tRNA; the 5S rRNA and some of its associated proteins might help stabilize positioning of ribosome-bound tRNAs. This Corynebacterium glutamicum (strain R) protein is Large ribosomal subunit protein uL5.